We begin with the raw amino-acid sequence, 196 residues long: MNRTKIVLATSNKGKVKEMADVLSAFGFEVIAQSEFGLVSPPETGLTFVENALLKARYASKMTGLPAIADDSGLAVDALAGAPGLYSARYAGIEDDDTANRRKLLAEMQNVPDGQRAAKFVSCIVMLKHETDPTPKIAFGECFGEILREERGQNGFGYDALFFYPAKQCTFAELDSTEKKQISHRALALVALQKQL.

Position 10–15 (10–15) interacts with substrate; the sequence is TSNKGK. Asp71 serves as the catalytic Proton acceptor. Asp71 serves as a coordination point for Mg(2+). Residues Ser72, 156-159, Lys179, and 184-185 each bind substrate; these read FGYD and HR.

It belongs to the HAM1 NTPase family. As to quaternary structure, homodimer. Mg(2+) serves as cofactor.

The enzyme catalyses XTP + H2O = XMP + diphosphate + H(+). The catalysed reaction is dITP + H2O = dIMP + diphosphate + H(+). It carries out the reaction ITP + H2O = IMP + diphosphate + H(+). Its function is as follows. Pyrophosphatase that catalyzes the hydrolysis of nucleoside triphosphates to their monophosphate derivatives, with a high preference for the non-canonical purine nucleotides XTP (xanthosine triphosphate), dITP (deoxyinosine triphosphate) and ITP. Seems to function as a house-cleaning enzyme that removes non-canonical purine nucleotides from the nucleotide pool, thus preventing their incorporation into DNA/RNA and avoiding chromosomal lesions. This Haemophilus ducreyi (strain 35000HP / ATCC 700724) protein is dITP/XTP pyrophosphatase.